Reading from the N-terminus, the 432-residue chain is Tol-Pal system protein TolB (432 aa).

Residues 1–21 form the signal peptide; that stretch reads MKKVIYTIVGFVFMWSTSVYA.

The protein belongs to the TolB family. In terms of assembly, the Tol-Pal system is composed of five core proteins: the inner membrane proteins TolA, TolQ and TolR, the periplasmic protein TolB and the outer membrane protein Pal. They form a network linking the inner and outer membranes and the peptidoglycan layer.

The protein resides in the periplasm. Part of the Tol-Pal system, which plays a role in outer membrane invagination during cell division and is important for maintaining outer membrane integrity. The polypeptide is Tol-Pal system protein TolB (Hydrogenovibrio crunogenus (strain DSM 25203 / XCL-2) (Thiomicrospira crunogena)).